A 443-amino-acid chain; its full sequence is Putative transporter AmpG 1 (443 aa).

The next 12 membrane-spanning stretches (helical) occupy residues 6–26 (HVCI…MITG), 43–63 (IGIL…APVF), 74–96 (ILGH…TSIL), 106–128 (VLLS…ILSA), 144–164 (GIYI…AIYL), 172–192 (KIYQ…ILVS), 255–275 (DISL…YRLP), 300–320 (VCKF…GIIM), 326–346 (LYSI…FILL), 355–375 (ILFI…TAYI), 394–414 (LSSM…YMVV), and 416–436 (FGWQ…LLIL).

It belongs to the major facilitator superfamily.

Its subcellular location is the cell inner membrane. The protein is Putative transporter AmpG 1 (ampG1) of Rickettsia typhi (strain ATCC VR-144 / Wilmington).